Consider the following 219-residue polypeptide: PRELI domain-containing protein 1, mitochondrial (219 aa).

The region spanning 36-174 (TEDIVHREVT…ILAKLQGEAP (139 aa)) is the PRELI/MSF1 domain.

Forms a complex with TRIAP1 in the mitochondrion intermembrane space. Interacts with OPA1 and AIFM1. In terms of tissue distribution, highly expressed in fetal liver; less expressed in fetal brain, lung, and kidney. At the adult stage, expression is drastically reduced in the liver but highly expressed in the spleen, brain, lung, lymph nodes and peripheral blood leukocytes.

It is found in the mitochondrion. The protein localises to the mitochondrion intermembrane space. The catalysed reaction is a 1,2-diacyl-sn-glycero-3-phosphate(in) = a 1,2-diacyl-sn-glycero-3-phosphate(out). In terms of biological role, involved in the modulation of the mitochondrial apoptotic pathway by ensuring the accumulation of cardiolipin (CL) in mitochondrial membranes. In vitro, the TRIAP1:PRELID1 complex mediates the transfer of phosphatidic acid (PA) between liposomes and probably functions as a PA transporter across the mitochondrion intermembrane space to provide PA for CL synthesis in the inner membrane. Regulates the mitochondrial apoptotic pathway in primary Th cells. Regulates Th cell differentiation by down-regulating STAT6 thereby reducing IL-4-induced Th2 cell number. May be important for the development of vital and immunocompetent organs. This chain is PRELI domain-containing protein 1, mitochondrial (PRELID1), found in Homo sapiens (Human).